Consider the following 242-residue polypeptide: Synaptonemal complex central element protein 1-like (242 aa).

The segment at 1–24 is disordered; that stretch reads MAGKLKPLNVEAPEATEEAEGQAK. Residues 44 to 181 adopt a coiled-coil conformation; that stretch reads LEPQIEDLIS…LREVERRLHS (138 aa). Residues 206–242 form a disordered region; the sequence is VRSAPEVGAGEGEAGPELPRARDEEDPEPPVAAPDAL.

The protein belongs to the SYCE family.

Its function is as follows. May be involved in meiosis. The protein is Synaptonemal complex central element protein 1-like (SYCE1L) of Homo sapiens (Human).